The following is a 513-amino-acid chain: Cobyric acid synthase (513 aa).

One can recognise a GATase cobBQ-type domain in the interval 270–470; that stretch reads RLRIAIVAYP…THGLFESPAV (201 aa). Catalysis depends on C351, which acts as the Nucleophile. H462 is a catalytic residue.

This sequence belongs to the CobB/CobQ family. CobQ subfamily.

Its pathway is cofactor biosynthesis; adenosylcobalamin biosynthesis. In terms of biological role, catalyzes amidations at positions B, D, E, and G on adenosylcobyrinic A,C-diamide. NH(2) groups are provided by glutamine, and one molecule of ATP is hydrogenolyzed for each amidation. This chain is Cobyric acid synthase, found in Leptothrix cholodnii (strain ATCC 51168 / LMG 8142 / SP-6) (Leptothrix discophora (strain SP-6)).